A 269-amino-acid chain; its full sequence is 3-methyl-2-oxobutanoate hydroxymethyltransferase (269 aa).

2 residues coordinate Mg(2+): aspartate 49 and aspartate 88. Residues 49-50 (DS), aspartate 88, and lysine 118 contribute to the 3-methyl-2-oxobutanoate site. Glutamate 120 is a Mg(2+) binding site. The active-site Proton acceptor is the glutamate 186.

Belongs to the PanB family. Homodecamer; pentamer of dimers. The cofactor is Mg(2+).

The protein localises to the cytoplasm. It carries out the reaction 3-methyl-2-oxobutanoate + (6R)-5,10-methylene-5,6,7,8-tetrahydrofolate + H2O = 2-dehydropantoate + (6S)-5,6,7,8-tetrahydrofolate. It participates in cofactor biosynthesis; (R)-pantothenate biosynthesis; (R)-pantoate from 3-methyl-2-oxobutanoate: step 1/2. Functionally, catalyzes the reversible reaction in which hydroxymethyl group from 5,10-methylenetetrahydrofolate is transferred onto alpha-ketoisovalerate to form ketopantoate. This Pelobacter propionicus (strain DSM 2379 / NBRC 103807 / OttBd1) protein is 3-methyl-2-oxobutanoate hydroxymethyltransferase.